We begin with the raw amino-acid sequence, 616 residues long: Chaperone protein HtpG (616 aa).

Residues 1 to 333 (MKKQFDTEVN…CQDLPLNVSR (333 aa)) are a; substrate-binding. Residues 334-542 (EILQQNKILS…SNDPTYQMQK (209 aa)) form a b region. The interval 543–616 (IMLSMGQEVK…INEFLEKELL (74 aa)) is c.

It belongs to the heat shock protein 90 family. In terms of assembly, homodimer.

It is found in the cytoplasm. Its function is as follows. Molecular chaperone. Has ATPase activity. The polypeptide is Chaperone protein HtpG (Borrelia garinii subsp. bavariensis (strain ATCC BAA-2496 / DSM 23469 / PBi) (Borreliella bavariensis)).